The following is a 248-amino-acid chain: DNA repair protein RecO (248 aa).

Belongs to the RecO family.

Involved in DNA repair and RecF pathway recombination. The chain is DNA repair protein RecO from Bradyrhizobium sp. (strain BTAi1 / ATCC BAA-1182).